The following is a 315-amino-acid chain: uncharacterized protein (315 aa).

3 helical membrane-spanning segments follow: residues 19–39 (IGAG…GNVF), 56–76 (TVLV…LHSF), and 81–101 (PLKK…ISLI). Residues 154–171 (EDSASSGRTSSSVNQPIQ) are compositionally biased toward polar residues. Residues 154 to 214 (EDSASSGRTS…EREARAQEHD (61 aa)) are disordered. Basic and acidic residues predominate over residues 203 to 214 (GGEREARAQEHD).

Belongs to the ATPase C chain family.

The protein resides in the mitochondrion membrane. This is an uncharacterized protein from Arabidopsis thaliana (Mouse-ear cress).